Here is a 304-residue protein sequence, read N- to C-terminus: Large ribosomal subunit protein uL2 (304 aa).

Positions 246-282 (HTRGTAMNPVDHPHGGGEGRTRGKHPESPWGWKTKGY) are disordered. Residues 256–272 (DHPHGGGEGRTRGKHPE) show a composition bias toward basic and acidic residues.

This sequence belongs to the universal ribosomal protein uL2 family. As to quaternary structure, part of the 50S ribosomal subunit. Forms a bridge to the 30S subunit in the 70S ribosome.

Its function is as follows. One of the primary rRNA binding proteins. Required for association of the 30S and 50S subunits to form the 70S ribosome, for tRNA binding and peptide bond formation. It has been suggested to have peptidyltransferase activity; this is somewhat controversial. Makes several contacts with the 16S rRNA in the 70S ribosome. The chain is Large ribosomal subunit protein uL2 from Aquifex aeolicus (strain VF5).